Consider the following 297-residue polypeptide: Phospholipid scramblase 2 (297 aa).

Residues 1–72 (MRSWNSLFCL…NQPGRPEGVP (72 aa)) form a proline-rich domain (PRD) region. At 1 to 276 (MRSWNSLFCL…IQFPRDLDVK (276 aa)) the chain is on the cytoplasmic side. Threonine 149 is subject to Phosphothreonine; by PKC. 5 S-palmitoyl cysteine lipidation sites follow: cysteine 172, cysteine 173, cysteine 174, cysteine 176, and cysteine 177. Residues 277-293 (MKAVMIGACFLIDYMFF) form a helical membrane-spanning segment. At 294–297 (ERTR) the chain is on the extracellular side.

Belongs to the phospholipid scramblase family. It depends on Ca(2+) as a cofactor. Expression of isoform 1 seems restricted to testis.

The protein resides in the membrane. Its subcellular location is the nucleus. It carries out the reaction a 1,2-diacyl-sn-glycero-3-phosphocholine(in) = a 1,2-diacyl-sn-glycero-3-phosphocholine(out). Functionally, may catalyze calcium-induced ATP-independent rapid bidirectional and non-specific movement of phospholipids (lipid scrambling or lipid flip-flop) between the inner and outer leaflet of the plasma membrane. In terms of biological role, has no phospholipid scramblase activity, due to the lack of a N-terminal proline-rich domain. This chain is Phospholipid scramblase 2, found in Homo sapiens (Human).